The chain runs to 263 residues: uncharacterized protein (263 aa).

An ATP-binding site is contributed by 31–38 (GPTGSGKT).

This sequence belongs to the CbbQ/NirQ/NorQ/GpvN family.

This is an uncharacterized protein from Staphylococcus aureus (strain USA300).